The following is a 109-amino-acid chain: Small serum protein 2 (109 aa).

The first 19 residues, 1–19 (MRVFFSLIIFSFMLATCQG), serve as a signal peptide directing secretion. Intrachain disulfides connect Cys21–Cys72, Cys39–Cys64, Cys59–Cys93, Cys62–Cys71, and Cys84–Cys107.

In terms of assembly, forms a stable, non-covalent complex with serotriflin.

Its subcellular location is the secreted. In terms of biological role, may serve as a self-defense protein against the toxic effects of the snake venom during accidental envenomation. Does not show inhibitory activity towards brevilysin H6. The sequence is that of Small serum protein 2 from Protobothrops flavoviridis (Habu).